We begin with the raw amino-acid sequence, 423 residues long: F-box/LRR-repeat protein 2 (423 aa).

Residues 9-55 (GLINKKLPKELLLRIFSFLDIVTLCRCAQISKAWNILALDGSNWQRV) enclose the F-box domain. 13 LRR repeats span residues 61-87 (QTDV…SLRG), 88-113 (CIGV…NLNG), 114-139 (CTKI…DLTS), 140-165 (CVSV…NLSW), 166-191 (CDQI…LLRG), 192-217 (CTQL…NLQS), 218-243 (CSRI…CLSG), 244-269 (CSNL…EAAR), 270-295 (CSHL…DLEE), 296-321 (CVLI…SLSH), 322-350 (CELI…ELDN), 351-375 (CLLV…ELYD), and 376-401 (CQQV…AYFA). The interaction with Calmodulin stretch occupies residues 80–90 (LRKLSLRGCIG). K201 participates in a covalent cross-link: Glycyl lysine isopeptide (Lys-Gly) (interchain with G-Cter in ubiquitin). Residue T404 is modified to Phosphothreonine; by GSK3-beta. The S-geranylgeranyl cysteine moiety is linked to residue C420. Residues 420-423 (CVIL) carry the CAAX motif motif.

In terms of assembly, part of the SCF (SKP1-CUL1-F-box) E3 ubiquitin-protein ligase complex SCF(FBXL2) composed of CUL1, SKP1, RBX1 and FBXL2. Interacts with calmodulin; may antagonize substrate ubiquitination by SCF(FBXL2). May interact with PIK3R1. Interacts with PTPN13. Post-translationally, phosphorylated by GSK-beta (GSK3B), promoting recognition by FBXO3, leading to its ubiquitination by the SCF(FBXO3) complex. Ubiquitinated at Lys-201 by the SCF(FBXO3) complex in response to lipopolysaccharide (LPS), leading to its degradation by the proteasome.

It is found in the membrane. The protein operates within protein modification; protein ubiquitination. In terms of biological role, calcium-activated substrate recognition component of the SCF (SKP1-cullin-F-box protein) E3 ubiquitin-protein ligase complex, SCF(FBXL2), which mediates the ubiquitination and subsequent proteasomal degradation of target proteins. Unlike many F-box proteins, FBXL2 does not seem to target phosphodegron within its substrates but rather calmodulin-binding motifs and is thereby antagonized by calmodulin. This is the case for the cyclins CCND2 and CCND3 which polyubiquitination and subsequent degradation are inhibited by calmodulin. Through CCND2 and CCND3 degradation induces cell-cycle arrest in G(0). SCF(FBXL2) also mediates PIK3R2 ubiquitination and proteasomal degradation thereby regulating phosphatidylinositol 3-kinase signaling and autophagy. PCYT1A monoubiquitination by SCF(FBXL2) and subsequent degradation regulates synthesis of phosphatidylcholine, which is utilized for formation of membranes and of pulmonary surfactant. The SCF(FBXL2) complex acts as a regulator of inflammation by mediating ubiquitination and degradation of TRAF proteins (TRAF1, TRAF2, TRAF3, TRAF4, TRAF5 and TRAF6). The SCF(FBXL2) complex acts as a negative regulator of the NLRP3 inflammasome by mediating ubiquitination and degradation of NLRP3. This is F-box/LRR-repeat protein 2 from Mus musculus (Mouse).